A 601-amino-acid chain; its full sequence is Sodium-dependent phosphate transport protein 2C (601 aa).

Topologically, residues 1–75 are cytoplasmic; the sequence is MPNSLAGGQV…RRVVSSFLKA (75 aa). Ser-4 carries the phosphoserine modification. A helical membrane pass occupies residues 76 to 96; the sequence is CGLLGSLYFFICSLDILSSAF. The Extracellular portion of the chain corresponds to 97 to 110; it reads QLLGSKMAGDIFKD. A helical transmembrane segment spans residues 111–131; the sequence is NVVLSNPVAGLVIGVLVTVLV. The Cytoplasmic segment spans residues 132 to 187; that stretch reads QSSSTSSSIVVSMVASKLLTVQVSVPIIMGVNVGTSITSTLVSMAQSGDRDEFQRA. The helical transmembrane segment at 188–208 threads the bilayer; it reads FSGSAVHGIFNWLTVLVLLPL. Over 209–324 the chain is Extracellular; the sequence is ESATAALERL…FAGSKLTDLA (116 aa). N-linked (GlcNAc...) asparagine glycans are attached at residues Asn-264, Asn-267, and Asn-299. An intrachain disulfide couples Cys-275 to Cys-311. A helical transmembrane segment spans residues 325–345; it reads VGFILLAGSLLVLCVCLVLIV. The Cytoplasmic portion of the chain corresponds to 346–369; that stretch reads KLLNSVLKGRIAQAVKTVINADFP. Residues 370-390 traverse the membrane as a helical segment; the sequence is FPFGWLSGYLAILVGAGLTFL. Residues 391–441 lie on the Extracellular side of the membrane; sequence LQSSSVFTAAIVPLMGVGVIDLERAYPLFLGSNIGTTTTALLAALASPADM. The chain crosses the membrane as a helical span at residues 442 to 462; sequence LIFAVQVALIHFFFNLAGILL. Topologically, residues 463–487 are cytoplasmic; it reads WYLVPVLRLPIPLAKRFGNLTAQYR. The helical transmembrane segment at 488–508 threads the bilayer; that stretch reads WVAIVYLLLTFLLLPLAAFGL. Residues 509–512 are Extracellular-facing; that stretch reads SLAG. Residues 513 to 533 form a helical membrane-spanning segment; that stretch reads GTVLAAVGGPLVGLVLLIILV. Over 534 to 601 the chain is Cytoplasmic; it reads NVLQQHRPSW…NPQVIASQQL (68 aa).

The protein belongs to the SLC34A transporter family. In terms of tissue distribution, expressed only in the kidney.

It localises to the apical cell membrane. It catalyses the reaction 2 Na(+)(out) + phosphate(out) = 2 Na(+)(in) + phosphate(in). Involved in actively transporting phosphate into cells via Na(+) cotransport in the renal brush border membrane. The cotransport has a Na(+):Pi stoichiometry of 2:1 and is electroneutral. The polypeptide is Sodium-dependent phosphate transport protein 2C (Slc34a3) (Mus musculus (Mouse)).